A 158-amino-acid chain; its full sequence is Transcriptional repressor NrdR (158 aa).

A zinc finger lies at 3–34 (CPSCQNTDSRVLESRAADGGRSVRRRRECLNC). Positions 49–139 (ITVIKRDGCR…VYRQFRGIDD (91 aa)) constitute an ATP-cone domain.

This sequence belongs to the NrdR family. Requires Zn(2+) as cofactor.

In terms of biological role, negatively regulates transcription of bacterial ribonucleotide reductase nrd genes and operons by binding to NrdR-boxes. This is Transcriptional repressor NrdR from Synechococcus sp. (strain CC9902).